The primary structure comprises 351 residues: Actin maturation protease (351 aa).

The span at 1-19 shows a compositional bias: pro residues; that stretch reads MTSPCSPPLKPPISPPKTP. Residues 1–70 are disordered; the sequence is MTSPCSPPLK…PPAATGPAPR (70 aa). Positions 36-50 are enriched in low complexity; it reads LDFSALPSPPWSQQT. The segment covering 51-64 has biased composition (pro residues); that stretch reads PVPPPLPLPPPPAA. The interval 124–244 is peptidase C39-like; sequence SLIQEGPQCG…WAVSAGVLLG (121 aa). Cys-132 is an active-site residue. Ser-316 carries the post-translational modification Phosphoserine.

The protein belongs to the ACTMAP family. In terms of assembly, interacts (via N-terminus) with PFN2 isoforms IIa and IIb; the interactions may facilitate efficient cleavage of the acetylated N-terminus of immature actin. Interacts with PFN1.

The protein resides in the cytoplasm. The catalysed reaction is N-terminal N(alpha)-acetyl-L-methionyl-L-aspartyl-[protein] + H2O = N-terminal L-aspartyl-[protein] + N-acetyl-L-methionine. The enzyme catalyses N-terminal N(alpha)-acetyl-L-methionyl-L-glutamyl-[protein] + H2O = N-terminal L-glutamyl-[protein] + N-acetyl-L-methionine. It carries out the reaction N-terminal N(alpha)-acetyl-L-cysteinyl-L-aspartyl-[protein] + H2O = N-terminal L-aspartyl-[protein] + N-acetyl-L-cysteine. It catalyses the reaction N-terminal N(alpha)-acetyl-L-cysteinyl-L-glutamyl-[protein] + H2O = N-terminal L-glutamyl-[protein] + N-acetyl-L-cysteine. Actin maturation protease that specifically mediates the cleavage of immature acetylated N-terminal actin, thereby contributing to actin maturation. Cleaves N-terminal acetylated methionine of immature cytoplasmic beta- and gamma-actins ACTB and ACTG1 after translation. Cleaves N-terminal acetylated cysteine of muscle alpha-actins ACTA1, ACTC1 and ACTA2 after canonical removal of N-terminal methionine. This Homo sapiens (Human) protein is Actin maturation protease.